The primary structure comprises 76 residues: Putative membrane protein insertion efficiency factor (76 aa).

It belongs to the UPF0161 family.

The protein resides in the cell inner membrane. In terms of biological role, could be involved in insertion of integral membrane proteins into the membrane. This Anaeromyxobacter dehalogenans (strain 2CP-C) protein is Putative membrane protein insertion efficiency factor.